Here is a 141-residue protein sequence, read N- to C-terminus: Large ribosomal subunit protein uL16 (141 aa).

Positions 1–23 are disordered; that stretch reads MLMPKRTKYRKQMKGRNRGKAHR.

This sequence belongs to the universal ribosomal protein uL16 family. In terms of assembly, part of the 50S ribosomal subunit.

Binds 23S rRNA and is also seen to make contacts with the A and possibly P site tRNAs. The chain is Large ribosomal subunit protein uL16 from Helicobacter acinonychis (strain Sheeba).